The primary structure comprises 177 residues: Arginine metabolism regulation protein I (177 aa).

Over residues 1-12 (MTSNSDGSSTSP) the composition is skewed to polar residues. 2 disordered regions span residues 1–82 (MTSN…TRRK) and 157–177 (NASDTPDATDTSPAQEQSPAN). Acidic residues predominate over residues 40-53 (QDQEGDFDEEDDDD). Low complexity predominate over residues 56 to 67 (SVSTSTPTPTIT). Positions 80–134 (RRKQPIRYIENKTRRHVTFSKRRHGIMKKAYELSVLTGANILLLILANSGLVYTF) constitute an MADS-box domain. Residues 158–177 (ASDTPDATDTSPAQEQSPAN) are compositionally biased toward polar residues.

As to quaternary structure, interacts with ARG81 and ARG82.

The protein resides in the nucleus. Functionally, with ARG81, ARG82 and MCM1, coordinates the expression of arginine anabolic and catabolic genes in response to arginine. The protein is Arginine metabolism regulation protein I (ARG80) of Saccharomyces cerevisiae (strain ATCC 204508 / S288c) (Baker's yeast).